The following is a 360-amino-acid chain: S-adenosylmethionine:tRNA ribosyltransferase-isomerase (360 aa).

Belongs to the QueA family. In terms of assembly, monomer.

The protein resides in the cytoplasm. It catalyses the reaction 7-aminomethyl-7-carbaguanosine(34) in tRNA + S-adenosyl-L-methionine = epoxyqueuosine(34) in tRNA + adenine + L-methionine + 2 H(+). It participates in tRNA modification; tRNA-queuosine biosynthesis. In terms of biological role, transfers and isomerizes the ribose moiety from AdoMet to the 7-aminomethyl group of 7-deazaguanine (preQ1-tRNA) to give epoxyqueuosine (oQ-tRNA). This Sinorhizobium medicae (strain WSM419) (Ensifer medicae) protein is S-adenosylmethionine:tRNA ribosyltransferase-isomerase.